We begin with the raw amino-acid sequence, 924 residues long: MLRPQLNPSSHTTTTSSSSSTQLFASSSCIASLRRPSSSSSSVVAAARRTRGQGSSRVVVVCASSSATASRGDSSSDMAAAAAVRVKAVATIKVTVGELINRSIDIRDLIGRSLSLELVSSELDAKTGKEKATVRSYAHNVDDDDHSVVTYEADFDVPSGFGPIGAIIVTNELRQEMFLEDINLTASDGAGNSTVLPIRCNSWVQPKSVGDEGTPSKRIFFANKTYLPGQTPAGLRSYRKNDLQQKRGDGTGEREADDRVYDYDVYNDLGNPDSNGDLARPVLGGNKQFPYPRRCRTGRPPSKKDPKSETRKGNVYVPRDEEFSPEKEDYFLRKTVGSVLQAAVPAAQSLLLDKLKWNLPFPSFFVIDKLFEDGVELPGVDKLNFLESVVPRLLEHLRDTPAEKILRFETPANIQKDKFAWLRDEEFARETLAGINPYAIELVREFPLKSKLDPAVYGPAESAITADLLEEQMRRVMTVEEAISQKRLFMLDFHDLFLPYVHKIRSLDHTTMYGSRTVFFLTDDGTLQLLAIELTRPASPSQPQWRQVFTPSTDATMSWLWRMAKAHVRAHDAGHHELITHWLRTHCAVEPYIIAANRQLSEMHPIYQLLRPHFRYTMRINARARSALISAGGIIERSFSPQKYSMELSSVAYDKLWRFDTEALPADLVRRGMAEEDPTAEHGLKLAIEDYPFANDGLLIWDAIKTWVQAYVARFYPDADSVAGDEELQAFWTEVRTKGHGDKKDAPWWPKLDSPESLAHTLTTIVWVAAAHHAAVNFGQYDFGGYFPNRPSIARTVMPVEEPVDGAAMERFLDNPDQALRECFPSQVQATVVMAVLDVLSSHSTDEEYLGGEQTRPWNSDAAVQAAYDGFAARLKEIEGVIDGRNKDRKLKNRCGAGILPYQLMKPFSDSGVTGMGIPNSTSI.

The transit peptide at 1–61 (MLRPQLNPSS…GQGSSRVVVV (61 aa)) directs the protein to the chloroplast. The region spanning 88–218 (AVATIKVTVG…VGDEGTPSKR (131 aa)) is the PLAT domain. One can recognise a Lipoxygenase domain in the interval 225–924 (TYLPGQTPAG…GMGIPNSTSI (700 aa)). Residues 231–315 (TPAGLRSYRK…PKSETRKGNV (85 aa)) form a disordered region. Basic and acidic residues-rich tracts occupy residues 239–262 (RKNDLQQKRGDGTGEREADDRVYD) and 302–315 (SKKDPKSETRKGNV). Fe cation is bound by residues His-581, His-586, His-773, Asn-777, and Ile-924.

It belongs to the lipoxygenase family. Requires Fe cation as cofactor.

The protein localises to the plastid. Its subcellular location is the chloroplast. It catalyses the reaction (9Z,12Z)-octadecadienoate + O2 = (13S)-hydroperoxy-(9Z,11E)-octadecadienoate. It carries out the reaction (9Z,12Z,15Z)-octadecatrienoate + O2 = (13S)-hydroperoxy-(9Z,11E,15Z)-octadecatrienoate. Its pathway is lipid metabolism; oxylipin biosynthesis. Its function is as follows. Plant lipoxygenase may be involved in a number of diverse aspects of plant physiology including growth and development, pest resistance, and senescence or responses to wounding. This lipoxygenase introduces molecular oxygen exclusively into the C-13 position of linoleic and linolenic acids. The polypeptide is Lipoxygenase 7, chloroplastic (CM-LOX1) (Oryza sativa subsp. japonica (Rice)).